The chain runs to 684 residues: Pseudohemocyanin-1 (684 aa).

Residues 1–23 form the signal peptide; that stretch reads SLVVAAAAASPYSGSHDFSGFQR. Positions 7–32 are disordered; the sequence is AAASPYSGSHDFSGFQRDEPDGVPTA. N-linked (GlcNAc...) asparagine glycosylation is found at Asn100, Asn193, Asn230, and Asn626.

The protein belongs to the tyrosinase family. Hemocyanin subfamily. In terms of assembly, hexamer. Strongly expressed in ovaries. Also expressed in heart. Not detected in hepatopancreas, gills, connective tissue or muscle.

In terms of biological role, does not function as a hemocyanin. The polypeptide is Pseudohemocyanin-1 (Homarus americanus (American lobster)).